The chain runs to 489 residues: Heme-based aerotactic transducer HemAT (489 aa).

Positions 218-454 (PLSSLEATSQ…EVAEMVDDVD (237 aa)) constitute a Methyl-accepting transducer domain.

Belongs to the methyl-accepting chemotaxis (MCP) protein family. In terms of assembly, homotetramer.

Heme-containing signal transducer responsible for aerotaxis, the migratory response toward or away from oxygen. In Halobacterium salinarum (strain ATCC 700922 / JCM 11081 / NRC-1) (Halobacterium halobium), this protein is Heme-based aerotactic transducer HemAT (hemAT).